The chain runs to 207 residues: High frequency lysogenization protein HflD homolog (207 aa).

It belongs to the HflD family.

The protein resides in the cytoplasm. The protein localises to the cell inner membrane. This chain is High frequency lysogenization protein HflD homolog, found in Cellvibrio japonicus (strain Ueda107) (Pseudomonas fluorescens subsp. cellulosa).